The sequence spans 120 residues: Large ribosomal subunit protein uL18 (120 aa).

This sequence belongs to the universal ribosomal protein uL18 family. Part of the 50S ribosomal subunit; part of the 5S rRNA/L5/L18/L25 subcomplex. Contacts the 5S and 23S rRNAs.

In terms of biological role, this is one of the proteins that bind and probably mediate the attachment of the 5S RNA into the large ribosomal subunit, where it forms part of the central protuberance. The protein is Large ribosomal subunit protein uL18 of Agrobacterium fabrum (strain C58 / ATCC 33970) (Agrobacterium tumefaciens (strain C58)).